We begin with the raw amino-acid sequence, 224 residues long: Peroxiredoxin-6 (224 aa).

Residues 5–169 (LLLGDEAPNF…ILRVIISLQL (165 aa)) form the Thioredoxin domain. Residues 31–40 (DSWGILFSHP) form a required and sufficient for targeting to lysosomes and lamellar bodies region. The residue at position 44 (Thr44) is a Phosphothreonine. Cys47 serves as the catalytic Cysteine sulfenic acid (-SOH) intermediate; for peroxidase activity. Position 63 is an N6-acetyllysine (Lys63). Phosphotyrosine is present on Tyr89. Asp140 functions as the For phospholipase activity in the catalytic mechanism. Residue Thr177 is modified to Phosphothreonine; by MAPK. Residue Lys209 is modified to N6-acetyllysine; alternate. At Lys209 the chain carries N6-succinyllysine; alternate.

Belongs to the peroxiredoxin family. Prx6 subfamily. Homodimer. Interacts with GSTP1; mediates PRDX6 glutathionylation and regeneration. Interacts with APEX1. Interacts with STH. May interact with FAM168B. May interact with HTR2A. Irreversibly inactivated by overoxidation of Cys-47 to sulfinic acid (Cys-SO(2)H) and sulfonic acid (Cys-SO(3)H) forms upon oxidative stress. Post-translationally, phosphorylation at Thr-177 by MAP kinases increases the phospholipase activity of the enzyme. The phosphorylated form exhibits a greater lysophosphatidylcholine acyltransferase activity compared to the non-phosphorylated form.

It localises to the cytoplasm. It is found in the lysosome. It carries out the reaction a hydroperoxide + 2 glutathione = an alcohol + glutathione disulfide + H2O. It catalyses the reaction a 1,2-diacyl-sn-glycero-3-phosphocholine + H2O = a 1-acyl-sn-glycero-3-phosphocholine + a fatty acid + H(+). The enzyme catalyses a 1-acyl-sn-glycero-3-phosphocholine + an acyl-CoA = a 1,2-diacyl-sn-glycero-3-phosphocholine + CoA. The catalysed reaction is 1-hexadecanoyl-sn-glycero-3-phosphocholine + hexadecanoyl-CoA = 1,2-dihexadecanoyl-sn-glycero-3-phosphocholine + CoA. It carries out the reaction 1,2-dihexadecanoyl-sn-glycero-3-phosphocholine + H2O = 1-hexadecanoyl-sn-glycero-3-phosphocholine + hexadecanoate + H(+). In terms of biological role, thiol-specific peroxidase that catalyzes the reduction of hydrogen peroxide and organic hydroperoxides to water and alcohols, respectively. Can reduce H(2)O(2) and short chain organic, fatty acid, and phospholipid hydroperoxides. Also has phospholipase activity, and can therefore either reduce the oxidized sn-2 fatty acyl group of phospholipids (peroxidase activity) or hydrolyze the sn-2 ester bond of phospholipids (phospholipase activity). These activities are dependent on binding to phospholipids at acidic pH and to oxidized phospholipds at cytosolic pH. Plays a role in cell protection against oxidative stress by detoxifying peroxides and in phospholipid homeostasis. Exhibits acyl-CoA-dependent lysophospholipid acyltransferase which mediates the conversion of lysophosphatidylcholine (1-acyl-sn-glycero-3-phosphocholine or LPC) into phosphatidylcholine (1,2-diacyl-sn-glycero-3-phosphocholine or PC). Shows a clear preference for LPC as the lysophospholipid and for palmitoyl CoA as the fatty acyl substrate. The polypeptide is Peroxiredoxin-6 (PRDX6) (Sus scrofa (Pig)).